Here is a 496-residue protein sequence, read N- to C-terminus: Glycerol kinase (496 aa).

Thr14 provides a ligand contact to ADP. ATP is bound by residues Thr14 and Thr15. Thr14 is a sn-glycerol 3-phosphate binding site. Positions 84, 85, 136, and 246 each coordinate sn-glycerol 3-phosphate. 5 residues coordinate glycerol: Arg84, Glu85, Tyr136, Asp246, and Gln247. The ADP site is built by Thr268 and Gly313. ATP contacts are provided by Thr268, Gly313, Gln317, and Gly414. Residues Gly414 and Asn418 each coordinate ADP.

The protein belongs to the FGGY kinase family.

The catalysed reaction is glycerol + ATP = sn-glycerol 3-phosphate + ADP + H(+). Its pathway is polyol metabolism; glycerol degradation via glycerol kinase pathway; sn-glycerol 3-phosphate from glycerol: step 1/1. With respect to regulation, inhibited by fructose 1,6-bisphosphate (FBP). Functionally, key enzyme in the regulation of glycerol uptake and metabolism. Catalyzes the phosphorylation of glycerol to yield sn-glycerol 3-phosphate. The chain is Glycerol kinase from Myxococcus xanthus (strain DK1622).